Here is a 273-residue protein sequence, read N- to C-terminus: 4-hydroxy-tetrahydrodipicolinate reductase (273 aa).

NAD(+) is bound at residue 12–17 (GAGGRM). Arg-39 serves as a coordination point for NADP(+). Residues 102–104 (GTT) and 126–129 (AANF) each bind NAD(+). His-159 serves as the catalytic Proton donor/acceptor. His-160 lines the (S)-2,3,4,5-tetrahydrodipicolinate pocket. Lys-163 functions as the Proton donor in the catalytic mechanism. A (S)-2,3,4,5-tetrahydrodipicolinate-binding site is contributed by 169–170 (GT).

This sequence belongs to the DapB family. As to quaternary structure, homotetramer.

The protein localises to the cytoplasm. The catalysed reaction is (S)-2,3,4,5-tetrahydrodipicolinate + NAD(+) + H2O = (2S,4S)-4-hydroxy-2,3,4,5-tetrahydrodipicolinate + NADH + H(+). It carries out the reaction (S)-2,3,4,5-tetrahydrodipicolinate + NADP(+) + H2O = (2S,4S)-4-hydroxy-2,3,4,5-tetrahydrodipicolinate + NADPH + H(+). It participates in amino-acid biosynthesis; L-lysine biosynthesis via DAP pathway; (S)-tetrahydrodipicolinate from L-aspartate: step 4/4. Its function is as follows. Catalyzes the conversion of 4-hydroxy-tetrahydrodipicolinate (HTPA) to tetrahydrodipicolinate. The sequence is that of 4-hydroxy-tetrahydrodipicolinate reductase from Sodalis glossinidius (strain morsitans).